The chain runs to 121 residues: Small ribosomal subunit protein uS13 (121 aa).

The segment at 94–121 (GLPVRGQNTKNNARTRKGPRRTVANKKK) is disordered. Residues 106-121 (ARTRKGPRRTVANKKK) are compositionally biased toward basic residues.

Belongs to the universal ribosomal protein uS13 family. In terms of assembly, part of the 30S ribosomal subunit. Forms a loose heterodimer with protein S19. Forms two bridges to the 50S subunit in the 70S ribosome.

In terms of biological role, located at the top of the head of the 30S subunit, it contacts several helices of the 16S rRNA. In the 70S ribosome it contacts the 23S rRNA (bridge B1a) and protein L5 of the 50S subunit (bridge B1b), connecting the 2 subunits; these bridges are implicated in subunit movement. Contacts the tRNAs in the A and P-sites. The chain is Small ribosomal subunit protein uS13 from Anoxybacillus flavithermus (strain DSM 21510 / WK1).